A 326-amino-acid chain; its full sequence is Probable pectate lyase B (326 aa).

The signal sequence occupies residues 1 to 15 (MRVTAILTLATIAIA). Ca(2+) contacts are provided by D133, D162, and D166. Residue R219 is part of the active site.

It belongs to the polysaccharide lyase 1 family. The cofactor is Ca(2+).

It is found in the secreted. It catalyses the reaction Eliminative cleavage of (1-&gt;4)-alpha-D-galacturonan to give oligosaccharides with 4-deoxy-alpha-D-galact-4-enuronosyl groups at their non-reducing ends.. In terms of biological role, pectinolytic enzyme consist of four classes of enzymes: pectin lyase, polygalacturonase, pectin methylesterase and rhamnogalacturonase. Among pectinolytic enzymes, pectin lyase is the most important in depolymerization of pectin, since it cleaves internal glycosidic bonds of highly methylated pectins. Favors pectate, the anion, over pectin, the methyl ester. The sequence is that of Probable pectate lyase B (plyB) from Aspergillus flavus (strain ATCC 200026 / FGSC A1120 / IAM 13836 / NRRL 3357 / JCM 12722 / SRRC 167).